The chain runs to 159 residues: bZIP transcription factor 11 (159 aa).

Over residues 1-21 (MESSSSGTTSSTIQTSSGSEE) the composition is skewed to low complexity. The disordered stretch occupies residues 1–47 (MESSSSGTTSSTIQTSSGSEESLMEQRKRKRMLSNRESARRSRMKKQ). The region spanning 25–88 (EQRKRKRMLS…LTVEAENSVL (64 aa)) is the bZIP domain. Residues 27–48 (RKRKRMLSNRESARRSRMKKQK) form a basic motif region. Residues 53–67 (LTAQVNHLKKENTEI) are leucine-zipper.

In terms of assembly, forms heterodimers with BZIP1, BZIP9, BZIP10, BZIP25 and BZIP63. Interacts with ADA2B. In terms of tissue distribution, highly expressed in stems and flowers. Expressed in root tips, cotyledons, leaf vasculature, embryos, apical parts of siliques and funiculi.

It is found in the nucleus. Transcription factor that binds to the DNA sequence 5'-ACTCAT-3' in target gene promoters. Promotes POX1/PRODH1 expression in response to hypoosmolarity stress. Positively regulates the expression of ASN1 and POX2/PRODH2 genes, which are involved in amino acid metabolism. Regulates several metabolic pathways such as myo-inositol, raffinose and trehalose. Regulates several trehalose metabolism genes, including TRE1, TPP5 and TPP6. Mediates recruitment of the histone acetylation machinery to activate auxin-induced transcription. Interacts with ADA2B adapter protein to promote ADA2B-mediated recruitment of SAGA-like histone acetyltransferase complexes to specific auxin-responsive genes. This Arabidopsis thaliana (Mouse-ear cress) protein is bZIP transcription factor 11.